Reading from the N-terminus, the 200-residue chain is Small ribosomal subunit protein uS4 (200 aa).

The segment at 22-42 (TGKELEKRPYAPGPHGPGQRK) is disordered. An S4 RNA-binding domain is found at 92–152 (SRLDNIVYRL…EKSQNLSVVK (61 aa)).

The protein belongs to the universal ribosomal protein uS4 family. Part of the 30S ribosomal subunit. Contacts protein S5. The interaction surface between S4 and S5 is involved in control of translational fidelity.

Functionally, one of the primary rRNA binding proteins, it binds directly to 16S rRNA where it nucleates assembly of the body of the 30S subunit. In terms of biological role, with S5 and S12 plays an important role in translational accuracy. This is Small ribosomal subunit protein uS4 from Bacillus licheniformis (strain ATCC 14580 / DSM 13 / JCM 2505 / CCUG 7422 / NBRC 12200 / NCIMB 9375 / NCTC 10341 / NRRL NRS-1264 / Gibson 46).